The sequence spans 1206 residues: STE20-like serine/threonine-protein kinase (1206 aa).

A Phosphoserine modification is found at serine 14. In terms of domain architecture, Protein kinase spans 34–292; it reads WEIIGELGDG…TSQLLQHPFV (259 aa). ATP contacts are provided by residues 40-48 and lysine 63; that span reads LGDGAFGKV. The active-site Proton acceptor is aspartate 155. Threonine 183 carries the post-translational modification Phosphothreonine. A Phosphoserine modification is found at serine 189. Residues 308-352 are disordered; the sequence is KAEVTEEVEDGKEEDDDDETESALPIPANKRASSDLSIASSEEDK. Residues 312–328 are compositionally biased toward acidic residues; sequence TEEVEDGKEEDDDDETE. A phosphoserine mark is found at serine 340, serine 341, serine 344, serine 347, serine 348, serine 354, and serine 372. A disordered region spans residues 364-440; sequence SERTEHNTSG…ESQPDTEDQQ (77 aa). Composition is skewed to basic and acidic residues over residues 381 to 395 and 420 to 429; these read LSEKPTPEGPEKTVD and ENGREKKRPQ. Residues 468–492 are a coiled coil; the sequence is EEDRNEENQEIIENKLTQSEEIKDI. Disordered stretches follow at residues 515–761 and 773–792; these read DNEV…SSSD and TKDSGSVSLQETRRQKKTLK. The segment covering 520–536 has biased composition (basic and acidic residues); sequence FTKEETQEKLGKDDKTH. Residues serine 545 and serine 563 each carry the phosphoserine modification. The span at 556–565 shows a compositional bias: polar residues; that stretch reads TQKSAEQSQD. The segment covering 584–609 has biased composition (basic and acidic residues); sequence KATEGPEAHGAEEEPRSGERVEDKQL. The segment covering 634–643 has biased composition (acidic residues); the sequence is EEPETDEVDQ. Phosphoserine occurs at positions 645, 649, and 668. Positions 691–702 are enriched in low complexity; that stretch reads AEPQAPAASQAS. Positions 747-757 are enriched in polar residues; the sequence is TDSGTGSTVEN. Serine 776 and serine 778 each carry phosphoserine. Phosphothreonine is present on threonine 813. Phosphoserine is present on serine 817. The stretch at 825–1037 forms a coiled coil; sequence LRRQELRELR…LKNRQTQERA (213 aa). Residues 874-909 form the UVR domain; that stretch reads DQEIENLEKQQKQTIERLEQEHTNRLRDEAKRIKGE. Threonine 1065 carries the phosphothreonine modification. Positions 1077–1151 form a coiled coil; that stretch reads AAQEEKRQKN…ELKEWREKLR (75 aa). Basic and acidic residues predominate over residues 1079–1099; the sequence is QEEKRQKNERMAQHQKHESQM. Disordered regions lie at residues 1079-1100 and 1181-1206; these read QEEKRQKNERMAQHQKHESQMR and LNPSAQSRGCLQTSHPSSTRAPAWAG. Polar residues predominate over residues 1181-1200; that stretch reads LNPSAQSRGCLQTSHPSSTR.

The protein belongs to the protein kinase superfamily. STE Ser/Thr protein kinase family. STE20 subfamily. Post-translationally, proteolytically cleaved by caspase-3. In terms of processing, autophosphorylated.

Its subcellular location is the cytoplasm. It catalyses the reaction L-seryl-[protein] + ATP = O-phospho-L-seryl-[protein] + ADP + H(+). The catalysed reaction is L-threonyl-[protein] + ATP = O-phospho-L-threonyl-[protein] + ADP + H(+). Its function is as follows. Mediates apoptosis and actin stress fiber dissolution. In Rattus norvegicus (Rat), this protein is STE20-like serine/threonine-protein kinase (Slk).